A 314-amino-acid polypeptide reads, in one-letter code: MDAYLHCLSHTPLVGFVDPEQAVLDEVNGVIADARRRISAFEPELVVLFAPDHYNGFFYDVMPPFCLGVGATAIGDFASAAGDLPVPTELAEACAHAVINSGIDLAVSYNMQVDHGFAQPLEFLLGGLDRVPVLPVFINGVAAPLPGFQRTRLLGEAMGRFLNTLNKRVLILGSGGLSHQPPVPELAKADAHLRDRLLGSGKQLPPDERERRQQRVINAARRFTEDQRSLHPLNPVWDNRFMSLLEQGRLAELDAIGNDELSAMAGKSTHEIKTWVAAFAALSAFGCWRSEGRYYRPIPEWIAGFGSLSATTEI.

His-115 serves as the catalytic Proton donor. The active-site Proton acceptor is the His-179.

It belongs to the LigB/MhpB extradiol dioxygenase family. Homotetramer. The cofactor is Fe(2+).

The catalysed reaction is 3-(2,3-dihydroxyphenyl)propanoate + O2 = (2Z,4E)-2-hydroxy-6-oxonona-2,4-dienedioate + H(+). It carries out the reaction (2E)-3-(2,3-dihydroxyphenyl)prop-2-enoate + O2 = (2Z,4E,7E)-2-hydroxy-6-oxonona-2,4,7-trienedioate + H(+). Its pathway is aromatic compound metabolism; 3-phenylpropanoate degradation. Catalyzes the non-heme iron(II)-dependent oxidative cleavage of 2,3-dihydroxyphenylpropionic acid and 2,3-dihydroxicinnamic acid into 2-hydroxy-6-ketononadienedioate and 2-hydroxy-6-ketononatrienedioate, respectively. The sequence is that of 2,3-dihydroxyphenylpropionate/2,3-dihydroxicinnamic acid 1,2-dioxygenase from Klebsiella pneumoniae (strain 342).